We begin with the raw amino-acid sequence, 105 residues long: uncharacterized protein (105 aa).

Belongs to the EspC family.

May be involved in assembly of the ESX-1 / type VII specialized secretion system (T7SS), which exports several proteins including EsxA and EsxB. Involved in DNA conjugation, in at least recipient strain. This is an uncharacterized protein from Mycolicibacterium smegmatis (strain MKD8) (Mycobacterium smegmatis).